Reading from the N-terminus, the 383-residue chain is Acetylornithine deacetylase (383 aa).

Residue H80 participates in Zn(2+) binding. Residue D82 is part of the active site. D112 serves as a coordination point for Zn(2+). E144 is a catalytic residue. The Zn(2+) site is built by E145, E169, and H355.

The protein belongs to the peptidase M20A family. ArgE subfamily. Homodimer. The cofactor is Zn(2+). Co(2+) is required as a cofactor. Glutathione serves as cofactor.

It localises to the cytoplasm. The enzyme catalyses N(2)-acetyl-L-ornithine + H2O = L-ornithine + acetate. It participates in amino-acid biosynthesis; L-arginine biosynthesis; L-ornithine from N(2)-acetyl-L-ornithine (linear): step 1/1. Catalyzes the hydrolysis of the amide bond of N(2)-acetylated L-amino acids. Cleaves the acetyl group from N-acetyl-L-ornithine to form L-ornithine, an intermediate in L-arginine biosynthesis pathway, and a branchpoint in the synthesis of polyamines. In Escherichia coli O9:H4 (strain HS), this protein is Acetylornithine deacetylase.